The primary structure comprises 468 residues: Acetyl-CoA decarbonylase/synthase complex subunit gamma 1 (468 aa).

Residues 1–61 form the 4Fe-4S domain; the sequence is MKINSPLEAY…YAKKLAELDR (61 aa). C18, C21, C26, and C43 together coordinate [4Fe-4S] cluster.

In terms of assembly, heterodimer of delta and gamma chains. The ACDS complex is made up of alpha, epsilon, beta, gamma and delta chains with a probable stoichiometry of (alpha(2)epsilon(2))(4)-beta(8)-(gamma(1)delta(1))(8). Corrinoid is required as a cofactor. Requires [4Fe-4S] cluster as cofactor.

It carries out the reaction 5,6,7,8-tetrahydrosarcinapterin + methyl-Co(III)-[corrinoid Fe-S protein] = 5-methyltetrahydrosarcinapterin + Co(I)-[corrinoid Fe-S protein] + H(+). The protein operates within one-carbon metabolism; methanogenesis from acetate. Its function is as follows. Part of a complex that catalyzes the reversible cleavage of acetyl-CoA, allowing growth on acetate as sole source of carbon and energy. The chain is Acetyl-CoA decarbonylase/synthase complex subunit gamma 1 from Methanosarcina thermophila.